The chain runs to 159 residues: Voltage-dependent N-type calcium channel subunit alpha-1B (159 aa).

The chain crosses the membrane as a helical span at residues Leu-1–Ile-5. Residues Leu-1–Ile-159 form an IV repeat. Residues Ala-6–Asn-13 lie on the Extracellular side of the membrane. N-linked (GlcNAc...) asparagine glycosylation occurs at Asn-13. Residues Leu-14–Gly-32 traverse the membrane as a helical segment. Residues Tyr-33–Tyr-51 lie on the Cytoplasmic side of the membrane. The helical transmembrane segment at Val-52–Phe-71 threads the bilayer. Topologically, residues Gly-72–Phe-135 are extracellular. The helical transmembrane segment at Ala-136–Phe-155 threads the bilayer. At Val-156 to Ile-159 the chain is on the cytoplasmic side.

This sequence belongs to the calcium channel alpha-1 subunit (TC 1.A.1.11) family. CACNA1B subfamily. In terms of assembly, multisubunit complex consisting of alpha-1, alpha-2, beta and delta subunits in a 1:1:1:1 ratio. The channel activity is directed by the pore-forming and voltage-sensitive alpha-1 subunit. In many cases, this subunit is sufficient to generate voltage-sensitive calcium channel activity. The auxiliary subunits beta and alpha-2/delta linked by a disulfide bridge regulate the channel activity. Interacts with RIMBP2. In terms of processing, phosphorylated in vitro by CaM-kinase II, PKA, PKC and CGPK.

It is found in the membrane. The enzyme catalyses Ca(2+)(in) = Ca(2+)(out). In terms of biological role, voltage-sensitive calcium channels (VSCC) mediate the entry of calcium ions into excitable cells and are also involved in a variety of calcium-dependent processes, including muscle contraction, hormone or neurotransmitter release, gene expression, cell motility, cell division and cell death. This alpha-1B subunit gives rise to N-type calcium currents. N-type calcium channels belong to the 'high-voltage activated' (HVA) group. They are involved in pain signaling. Calcium channels containing alpha-1B subunit may play a role in directed migration of immature neurons. Mediates Ca(2+) release probability at hippocampal neuronal soma and synaptic terminals. This is Voltage-dependent N-type calcium channel subunit alpha-1B (CACNA1B) from Gallus gallus (Chicken).